The chain runs to 210 residues: Hypoxanthine-guanine phosphoribosyltransferase (210 aa).

GMP-binding positions include K54, 113–121 (EDILDTALT), K145, and D173. D117 serves as the catalytic Proton acceptor. Mg(2+) is bound at residue D173.

It belongs to the purine/pyrimidine phosphoribosyltransferase family. It depends on Mg(2+) as a cofactor.

It localises to the cytoplasm. It carries out the reaction IMP + diphosphate = hypoxanthine + 5-phospho-alpha-D-ribose 1-diphosphate. It catalyses the reaction GMP + diphosphate = guanine + 5-phospho-alpha-D-ribose 1-diphosphate. It functions in the pathway purine metabolism; IMP biosynthesis via salvage pathway; IMP from hypoxanthine: step 1/1. Its function is as follows. Converts guanine to guanosine monophosphate, and hypoxanthine to inosine monophosphate. Transfers the 5-phosphoribosyl group from 5-phosphoribosylpyrophosphate onto the purine. Plays a central role in the generation of purine nucleotides through the purine salvage pathway. The chain is Hypoxanthine-guanine phosphoribosyltransferase (HGPRT) from Trypanosoma brucei brucei.